Reading from the N-terminus, the 115-residue chain is NADH-ubiquinone oxidoreductase chain 3 (115 aa).

The next 3 helical transmembrane spans lie at 4–24 (LTAL…AFWL), 55–75 (FFLV…LLPL), and 86–106 (VMML…AYEW).

It belongs to the complex I subunit 3 family. In terms of assembly, core subunit of respiratory chain NADH dehydrogenase (Complex I) which is composed of 45 different subunits. Interacts with TMEM186. Interacts with TMEM242.

It is found in the mitochondrion inner membrane. It catalyses the reaction a ubiquinone + NADH + 5 H(+)(in) = a ubiquinol + NAD(+) + 4 H(+)(out). Its function is as follows. Core subunit of the mitochondrial membrane respiratory chain NADH dehydrogenase (Complex I) which catalyzes electron transfer from NADH through the respiratory chain, using ubiquinone as an electron acceptor. Essential for the catalytic activity of complex I. In Isthmomys pirrensis (Mount Pirri Isthmus rat), this protein is NADH-ubiquinone oxidoreductase chain 3.